Reading from the N-terminus, the 181-residue chain is Oligoribonuclease (181 aa).

Positions 8–171 (LIWVDLEMTG…EDIKESIAEM (164 aa)) constitute an Exonuclease domain. Tyr129 is a catalytic residue.

This sequence belongs to the oligoribonuclease family.

Its subcellular location is the cytoplasm. Its function is as follows. 3'-to-5' exoribonuclease specific for small oligoribonucleotides. In Shewanella frigidimarina (strain NCIMB 400), this protein is Oligoribonuclease.